The following is a 181-amino-acid chain: Inner membrane-spanning protein YciB (181 aa).

Helical transmembrane passes span 8 to 28 (FPII…ATAA), 53 to 73 (ITLI…NAIF), 76 to 96 (WKPT…HFFG), 121 to 141 (LSWA…VYNF), and 149 to 169 (FKLF…AFYI).

This sequence belongs to the YciB family.

It localises to the cell inner membrane. Functionally, plays a role in cell envelope biogenesis, maintenance of cell envelope integrity and membrane homeostasis. This Coxiella burnetii (strain CbuG_Q212) (Coxiella burnetii (strain Q212)) protein is Inner membrane-spanning protein YciB.